Reading from the N-terminus, the 314-residue chain is MPLTNTQIRYYDSNVLRLPKDKRETYNAQVDRLITALRKKLKDQDKITIKRVVKAGSFAKHTILRKTSDSQVDVDVVFYVSGEKVAEETFASLSEKIYEALLKMYPNKAVEDFEIQRKAATVSFVGTGLDVDIVPVIENPDKEGYGWQFDRIDGSKTETCAPCQIKFVKERKDQDPDFRTLVRLAKRWRTNMECPLKSFHIELIMAHVLEVNGKDGSLEKRFRDFLLYIAESGLKEVITFPENSTIPAFSHPVVILDPVCDTNNVTSRITEDERKEIVRIAEKSWATANFASVEGDYDIWKELFGRSFKVEDAA.

Residue Lys60 participates in ATP binding. Asp73 and Asp75 together coordinate Mg(2+). ATP-binding positions include Asp75, Lys186, 197-199 (KSF), and Asn263.

This sequence belongs to the CD-NTase family. C01 subfamily. As to quaternary structure, forms complexes with Cap7 with 1:1 and 2:2 stoichimetry, and a 1:1:6 CdnC:Cap7:Cap6 complex. Mg(2+) serves as cofactor.

Its function is as follows. Cyclic nucleotide synthase (second messenger synthase) of a CBASS antivirus system. CBASS (cyclic oligonucleotide-based antiphage signaling system) provides immunity against bacteriophage. The CD-NTase protein synthesizes cyclic nucleotides in response to infection; these serve as specific second messenger signals. The signals activate a diverse range of effectors, leading to bacterial cell death and thus abortive phage infection. A type III CBASS system. Expression of this CBASS system (Cap18-Cap6-Cap7-CdnC-CapW-Cap17) in a susceptible E.coli (strain MG1655) confers resistance to bacteriophage P1. Probable cyclic nucleotide synthase that upon activation catalyzes the synthesis of a cyclic nucleotide. A cyclase activity for this enzyme was not identified in. This Escherichia coli (strain KTE188) protein is CBASS oligonucleotide cyclase CdnC.